We begin with the raw amino-acid sequence, 248 residues long: 1-(5-phosphoribosyl)-5-[(5-phosphoribosylamino)methylideneamino] imidazole-4-carboxamide isomerase (248 aa).

The Proton acceptor role is filled by D8. D130 serves as the catalytic Proton donor.

Belongs to the HisA/HisF family.

The protein resides in the cytoplasm. It catalyses the reaction 1-(5-phospho-beta-D-ribosyl)-5-[(5-phospho-beta-D-ribosylamino)methylideneamino]imidazole-4-carboxamide = 5-[(5-phospho-1-deoxy-D-ribulos-1-ylimino)methylamino]-1-(5-phospho-beta-D-ribosyl)imidazole-4-carboxamide. It functions in the pathway amino-acid biosynthesis; L-histidine biosynthesis; L-histidine from 5-phospho-alpha-D-ribose 1-diphosphate: step 4/9. The protein is 1-(5-phosphoribosyl)-5-[(5-phosphoribosylamino)methylideneamino] imidazole-4-carboxamide isomerase of Alkalilimnicola ehrlichii (strain ATCC BAA-1101 / DSM 17681 / MLHE-1).